We begin with the raw amino-acid sequence, 469 residues long: UDP-N-acetylmuramate--L-alanine ligase (469 aa).

113–119 (GAHGKTT) contacts ATP.

The protein belongs to the MurCDEF family.

The protein localises to the cytoplasm. The catalysed reaction is UDP-N-acetyl-alpha-D-muramate + L-alanine + ATP = UDP-N-acetyl-alpha-D-muramoyl-L-alanine + ADP + phosphate + H(+). The protein operates within cell wall biogenesis; peptidoglycan biosynthesis. Cell wall formation. This Syntrophobacter fumaroxidans (strain DSM 10017 / MPOB) protein is UDP-N-acetylmuramate--L-alanine ligase.